Reading from the N-terminus, the 862-residue chain is DNA mismatch repair protein MutS (862 aa).

Residue 604–611 (GPNMAGKS) participates in ATP binding.

The protein belongs to the DNA mismatch repair MutS family.

Its function is as follows. This protein is involved in the repair of mismatches in DNA. It is possible that it carries out the mismatch recognition step. This protein has a weak ATPase activity. The protein is DNA mismatch repair protein MutS of Brevibacillus brevis (strain 47 / JCM 6285 / NBRC 100599).